The primary structure comprises 1456 residues: Leucine-rich repeat-containing protein 9 (1456 aa).

LRR repeat units lie at residues Phe-53–Leu-78, Cys-97–Leu-119, Ile-120–Leu-141, Lys-142–Asn-164, Gln-166–Lys-188, Thr-190–Asn-212, Leu-224–Lys-248, and Asn-264–Leu-287. The segment at Ser-305 to Val-325 is disordered. The stretch at Leu-339–Thr-362 is one LRR 9 repeat. The residue at position 525 (Tyr-525) is a Phosphotyrosine. LRR repeat units follow at residues Lys-661–Tyr-683, Ser-684–Leu-705, Thr-706–Leu-727, Asn-729–Gly-748, Leu-749–Leu-772, Thr-776–Arg-802, Leu-806–Gln-833, Tyr-876–Leu-898, Glu-899–Cys-920, Val-921–Leu-942, Thr-943–Asn-965, Leu-967–Leu-991, Glu-993–Leu-1010, Leu-1013–Val-1037, Phe-1082–His-1105, Phe-1106–Leu-1128, Pro-1129–Gln-1151, Met-1191–Arg-1214, Leu-1215–Leu-1237, Ile-1238–Lys-1260, Ser-1262–Leu-1283, Val-1284–Val-1307, and Pro-1309–Leu-1335.

The chain is Leucine-rich repeat-containing protein 9 (Lrrc9) from Mus musculus (Mouse).